The chain runs to 123 residues: Preprofallaxidin-3 (123 aa).

The N-terminal stretch at 1–22 (MASLKKSLFLVLFLGLVSLSIC) is a signal peptide. Residues 23-46 (EEKKRENEDDAEDENHEEESEEKR) constitute a propeptide that is removed on maturation. The disordered stretch occupies residues 26–46 (KRENEDDAEDENHEEESEEKR). Over residues 30–42 (EDDAEDENHEEES) the composition is skewed to acidic residues. A Leucine amide modification is found at L62. The propeptide occupies 66–70 (SEEKR). F74 carries the phenylalanine amide modification. The propeptide occupies 78-82 (SEEKR). A Phenylalanine amide modification is found at F88. Residues 92–96 (SEEKR) constitute a propeptide that is removed on maturation. I102 bears the Isoleucine amide mark. A propeptide spanning residues 106–110 (SEEKR) is cleaved from the precursor. I116 carries the post-translational modification Isoleucine amide. Positions 120–123 (KKKK) are excised as a propeptide.

This sequence belongs to the frog skin active peptide (FSAP) family. Brevinin subfamily. In terms of tissue distribution, expressed by the skin glands.

The protein localises to the secreted. In terms of biological role, fallaxidin-1.1 shows no antibacterial activity against Gram-positive or Gram-negative bacteria. Does not inhibit the formation of NO by neuronal nitric oxide synthase. Has no effect on splenocyte proliferation or smooth muscle contraction. Its function is as follows. Fallaxidin-1.2 shows no antibacterial activity against Gram-positive or Gram-negative bacteria. Does not inhibit the formation of NO by neuronal nitric oxide synthase. Has no effect on splenocyte proliferation or smooth muscle contraction. Functionally, fallaxidin-1.3 shows no antibacterial activity against Gram-positive or Gram-negative bacteria. Does not inhibit the formation of NO by neuronal nitric oxide synthase. Has no effect on splenocyte proliferation or smooth muscle contraction. Fallaxidin-3.2 shows antibacterial activity against the Gram-positive bacteria E.faecalis (MIC=100 uM) and L.lactis (MIC=500 uM). No antibacterial activity against the Gram-positive bacteria B.cereus, L.innocua, M.luteus, S.epidermidis, S.uberis and S.aureus, or the Gram-negative bacteria E.cloacae and E.coli. This Litoria fallax (Eastern dwarf tree frog) protein is Preprofallaxidin-3.